The chain runs to 99 residues: Small ribosomal subunit protein bS20 (99 aa).

Belongs to the bacterial ribosomal protein bS20 family.

Its function is as follows. Binds directly to 16S ribosomal RNA. In Picosynechococcus sp. (strain ATCC 27264 / PCC 7002 / PR-6) (Agmenellum quadruplicatum), this protein is Small ribosomal subunit protein bS20.